Reading from the N-terminus, the 572-residue chain is Proline--tRNA ligase (572 aa).

The protein belongs to the class-II aminoacyl-tRNA synthetase family. ProS type 1 subfamily. In terms of assembly, homodimer.

It is found in the cytoplasm. The catalysed reaction is tRNA(Pro) + L-proline + ATP = L-prolyl-tRNA(Pro) + AMP + diphosphate. In terms of biological role, catalyzes the attachment of proline to tRNA(Pro) in a two-step reaction: proline is first activated by ATP to form Pro-AMP and then transferred to the acceptor end of tRNA(Pro). As ProRS can inadvertently accommodate and process non-cognate amino acids such as alanine and cysteine, to avoid such errors it has two additional distinct editing activities against alanine. One activity is designated as 'pretransfer' editing and involves the tRNA(Pro)-independent hydrolysis of activated Ala-AMP. The other activity is designated 'posttransfer' editing and involves deacylation of mischarged Ala-tRNA(Pro). The misacylated Cys-tRNA(Pro) is not edited by ProRS. The sequence is that of Proline--tRNA ligase from Buchnera aphidicola subsp. Acyrthosiphon pisum (strain 5A).